The primary structure comprises 329 residues: Zygote arrest protein 1 (329 aa).

Disordered regions lie at residues 106–132 (LRRR…RTQA) and 146–218 (FREE…DDLK). Residues 149–162 (EGEEEEDTDLEVTE) are compositionally biased toward acidic residues. The span at 166–177 (SAEKLESAEKNV) shows a compositional bias: basic and acidic residues. The 3CxxC-type zinc finger occupies 231-314 (KYGFYHCKDC…RQDLCGRCKG (84 aa)).

This sequence belongs to the ZAR1 family. Specifically expressed in ovaries but absent in testes.

It localises to the cytoplasm. The protein localises to the cytoplasmic ribonucleoprotein granule. Functionally, mRNA-binding protein required for maternal mRNA storage, translation and degradation during oocyte maturation. Probably promotes formation of some phase-separated membraneless compartment that stores maternal mRNAs in oocytes: acts by undergoing liquid-liquid phase separation upon binding to maternal mRNAs. Binds to the 3'-UTR of zona pellucida mRNAs, inhibiting their translation. The polypeptide is Zygote arrest protein 1 (Danio rerio (Zebrafish)).